The following is a 380-amino-acid chain: Acyl-lipid (9+3)-(E)-desaturase (380 aa).

The disordered stretch occupies residues 1 to 25 (MGAGGCISVSETKPNQKNSLERAPY). A compositionally biased stretch (polar residues) spans 9–18 (VSETKPNQKN). Transmembrane regions (helical) follow at residues 52–72 (LSYV…TTYF) and 81–101 (ALAW…VWVI). Residues 103 to 107 (HECGH) carry the Histidine box-1 motif. The short motif at 139 to 143 (HRRHH) is the Histidine box-2 element. 3 helical membrane passes run 177-197 (IGVL…FNVS), 223-243 (IYLS…AAMV), and 247-267 (VWLI…LVLV). The Histidine box-3 motif lies at 313–317 (HIVHH).

Belongs to the fatty acid desaturase type 1 family.

The protein resides in the membrane. The catalysed reaction is a (9Z)-octadecenoyl-containing glycerolipid + 2 Fe(II)-[cytochrome b5] + O2 + 2 H(+) = a (9Z,12E)-octadecadienoyl-containing glycerolipid + 2 Fe(III)-[cytochrome b5] + 2 H2O. It carries out the reaction a (9Z)-hexadecenoyl-containing glycerolipid + 2 Fe(II)-[cytochrome b5] + O2 + 2 H(+) = a (9Z,12E)-hexadecadienoyl-containing glycerolipid + 2 Fe(III)-[cytochrome b5] + 2 H2O. Functionally, involved in the biosynthesis of dimorphecolic acid (9-OH-18:2(10E,12E)). Converts oleic acid (18:1(9Z)) into 18:2(9Z,12E) and probably palmitoleic acid (16:1(9Z)) into 16:2(9Z,12E). Very limited ability to catalyze (Z)-delta(12) desaturation. In Dimorphotheca sinuata (African daisy), this protein is Acyl-lipid (9+3)-(E)-desaturase.